The sequence spans 645 residues: Putative bifunctional exonuclease/endonuclease protein MT2247 (645 aa).

Residues Val44–Leu207 form the Exonuclease domain. In terms of domain architecture, GIY-YIG spans His248–Arg326. A disordered region spans residues Trp603–Gly645. The segment covering Leu635 to Gly645 has biased composition (low complexity).

The polypeptide is Putative bifunctional exonuclease/endonuclease protein MT2247 (Mycobacterium tuberculosis (strain CDC 1551 / Oshkosh)).